A 328-amino-acid chain; its full sequence is Tetraacyldisaccharide 4'-kinase (328 aa).

55-62 (TVGGNGKT) lines the ATP pocket.

Belongs to the LpxK family.

It carries out the reaction a lipid A disaccharide + ATP = a lipid IVA + ADP + H(+). The protein operates within glycolipid biosynthesis; lipid IV(A) biosynthesis; lipid IV(A) from (3R)-3-hydroxytetradecanoyl-[acyl-carrier-protein] and UDP-N-acetyl-alpha-D-glucosamine: step 6/6. Functionally, transfers the gamma-phosphate of ATP to the 4'-position of a tetraacyldisaccharide 1-phosphate intermediate (termed DS-1-P) to form tetraacyldisaccharide 1,4'-bis-phosphate (lipid IVA). The polypeptide is Tetraacyldisaccharide 4'-kinase (Hamiltonella defensa subsp. Acyrthosiphon pisum (strain 5AT)).